Reading from the N-terminus, the 428-residue chain is Flotillin-2a (428 aa).

S-palmitoyl cysteine attachment occurs at residues cysteine 4, cysteine 19, and cysteine 20.

The protein belongs to the band 7/mec-2 family. Flotillin subfamily. As to quaternary structure, heterooligomer; Heterooligomerizes with ic complex of flotillins 1 and 2. Post-translationally, palmitoylation may be required for the formation of higher order complexes and for neurite outgrowth in cultured neural stem cells.

The protein resides in the membrane. It localises to the endosome. Its function is as follows. May play a role in axon growth and regeneration. May be involved in epidermal cell adhesion and epidermal structure and function. The sequence is that of Flotillin-2a (flot2a) from Danio rerio (Zebrafish).